A 373-amino-acid polypeptide reads, in one-letter code: Histidinol-phosphate aminotransferase (373 aa).

Residue lysine 229 is modified to N6-(pyridoxal phosphate)lysine.

It belongs to the class-II pyridoxal-phosphate-dependent aminotransferase family. Histidinol-phosphate aminotransferase subfamily. It depends on pyridoxal 5'-phosphate as a cofactor.

The enzyme catalyses L-histidinol phosphate + 2-oxoglutarate = 3-(imidazol-4-yl)-2-oxopropyl phosphate + L-glutamate. Its pathway is amino-acid biosynthesis; L-histidine biosynthesis; L-histidine from 5-phospho-alpha-D-ribose 1-diphosphate: step 7/9. This is Histidinol-phosphate aminotransferase (hisC) from Methanothermobacter thermautotrophicus (strain ATCC 29096 / DSM 1053 / JCM 10044 / NBRC 100330 / Delta H) (Methanobacterium thermoautotrophicum).